The primary structure comprises 178 residues: MDRAARCSGASSLPLLLALALGLVILHCVVADGNSTRSPETNGLLCGDPEENCAATTTQSKRKGHFSRCPKQYKHYCIKGRCRFVVAEQTPSCVCDEGYIGARCERVDLFYLRGDRGQILVICLIAVMVVFIILVIGVCTCCHPLRKRRKRKKKEEEMETLGKDITPINEDIEETNIA.

The signal sequence occupies residues 1–31; it reads MDRAARCSGASSLPLLLALALGLVILHCVVA. The Extracellular portion of the chain corresponds to 32–118; it reads DGNSTRSPET…LFYLRGDRGQ (87 aa). An N-linked (GlcNAc...) asparagine glycan is attached at asparagine 34. One can recognise an EGF-like domain in the interval 65 to 105; sequence HFSRCPKQYKHYCIKGRCRFVVAEQTPSCVCDEGYIGARCE. Cystine bridges form between cysteine 69–cysteine 82, cysteine 77–cysteine 93, and cysteine 95–cysteine 104. A propeptide spans 112 to 178 (removed in mature form); it reads LRGDRGQILV…NEDIEETNIA (67 aa). The chain crosses the membrane as a helical span at residues 119-139; sequence ILVICLIAVMVVFIILVIGVC. The Cytoplasmic segment spans residues 140–178; the sequence is TCCHPLRKRRKRKKKEEEMETLGKDITPINEDIEETNIA.

In terms of assembly, monomer. Interacts with EGFR and ERBB4. In terms of tissue distribution, synthesized in several tissues and tumor cells. Predominantly expressed in pancreas and small intestine.

The protein resides in the secreted. The protein localises to the extracellular space. Its subcellular location is the cell membrane. Functionally, growth factor that binds to EGFR, ERBB4 and other EGF receptor family members. Potent mitogen for retinal pigment epithelial cells and vascular smooth muscle cells. This Homo sapiens (Human) protein is Probetacellulin (BTC).